A 397-amino-acid polypeptide reads, in one-letter code: Elongation factor Tu (397 aa).

The 197-residue stretch at 10 to 206 (KPHVNIGTIG…AVDEAIPTPP (197 aa)) folds into the tr-type G domain. Residues 19–26 (GHIDHGKT) are G1. 19-26 (GHIDHGKT) is a GTP binding site. Threonine 26 contacts Mg(2+). A G2 region spans residues 62–66 (GITIS). The G3 stretch occupies residues 83-86 (DCPG). GTP contacts are provided by residues 83-87 (DCPGH) and 138-141 (NKAD). Residues 138–141 (NKAD) form a G4 region. A G5 region spans residues 176–178 (SAL).

This sequence belongs to the TRAFAC class translation factor GTPase superfamily. Classic translation factor GTPase family. EF-Tu/EF-1A subfamily. Monomer.

The protein resides in the cytoplasm. The enzyme catalyses GTP + H2O = GDP + phosphate + H(+). In terms of biological role, GTP hydrolase that promotes the GTP-dependent binding of aminoacyl-tRNA to the A-site of ribosomes during protein biosynthesis. The sequence is that of Elongation factor Tu from Kitasatospora aureofaciens (Streptomyces aureofaciens).